We begin with the raw amino-acid sequence, 56 residues long: Ovomucoid (56 aa).

Positions 6-56 (VDCSEYPKPDCTTEERPLCGSDNKTYGNKCNFCNAVVESNGTLTLSHFGKC) constitute a Kazal-like domain. 3 cysteine pairs are disulfide-bonded: C8-C38, C16-C35, and C24-C56. The N-linked (GlcNAc...) asparagine glycan is linked to N45.

The protein localises to the secreted. In Francolinus pondicerianus (Grey francolin), this protein is Ovomucoid.